We begin with the raw amino-acid sequence, 122 residues long: Large ribosomal subunit protein uL14 (122 aa).

Belongs to the universal ribosomal protein uL14 family. In terms of assembly, part of the 50S ribosomal subunit. Forms a cluster with proteins L3 and L19. In the 70S ribosome, L14 and L19 interact and together make contacts with the 16S rRNA in bridges B5 and B8.

In terms of biological role, binds to 23S rRNA. Forms part of two intersubunit bridges in the 70S ribosome. The protein is Large ribosomal subunit protein uL14 of Solibacter usitatus (strain Ellin6076).